We begin with the raw amino-acid sequence, 225 residues long: 2-C-methyl-D-erythritol 4-phosphate cytidylyltransferase (225 aa).

It belongs to the IspD/TarI cytidylyltransferase family. IspD subfamily.

The enzyme catalyses 2-C-methyl-D-erythritol 4-phosphate + CTP + H(+) = 4-CDP-2-C-methyl-D-erythritol + diphosphate. The protein operates within isoprenoid biosynthesis; isopentenyl diphosphate biosynthesis via DXP pathway; isopentenyl diphosphate from 1-deoxy-D-xylulose 5-phosphate: step 2/6. Its function is as follows. Catalyzes the formation of 4-diphosphocytidyl-2-C-methyl-D-erythritol from CTP and 2-C-methyl-D-erythritol 4-phosphate (MEP). In Chromobacterium violaceum (strain ATCC 12472 / DSM 30191 / JCM 1249 / CCUG 213 / NBRC 12614 / NCIMB 9131 / NCTC 9757 / MK), this protein is 2-C-methyl-D-erythritol 4-phosphate cytidylyltransferase.